A 604-amino-acid chain; its full sequence is UvrABC system protein C (604 aa).

The 79-residue stretch at 17–95 (SQPGVYRMLN…IKSLAPRYNI (79 aa)) folds into the GIY-YIG domain. The UVR domain maps to 204–239 (DEVLKTIEQKMFEASDRQAYEQAVLFRDQMQALRMI).

This sequence belongs to the UvrC family. As to quaternary structure, interacts with UvrB in an incision complex.

It is found in the cytoplasm. Functionally, the UvrABC repair system catalyzes the recognition and processing of DNA lesions. UvrC both incises the 5' and 3' sides of the lesion. The N-terminal half is responsible for the 3' incision and the C-terminal half is responsible for the 5' incision. The chain is UvrABC system protein C from Nitrosomonas eutropha (strain DSM 101675 / C91 / Nm57).